Reading from the N-terminus, the 303-residue chain is GTPase Era (303 aa).

The region spanning 9–176 (KSGFVSIIGR…VEQIVEHMEE (168 aa)) is the Era-type G domain. The G1 stretch occupies residues 17–24 (GRPNVGKS). Residue 17–24 (GRPNVGKS) participates in GTP binding. A G2 region spans residues 43–47 (QTTRN). The segment at 64–67 (DTPG) is G3. GTP contacts are provided by residues 64–68 (DTPGI) and 126–129 (NKID). Positions 126–129 (NKID) are G4. Residues 155–157 (ISA) form a G5 region. The region spanning 199–284 (IREKVLHLTK…YLELWVKVQK (86 aa)) is the KH type-2 domain.

Belongs to the TRAFAC class TrmE-Era-EngA-EngB-Septin-like GTPase superfamily. Era GTPase family. In terms of assembly, monomer.

It is found in the cytoplasm. The protein resides in the cell membrane. Functionally, an essential GTPase that binds both GDP and GTP, with rapid nucleotide exchange. Plays a role in 16S rRNA processing and 30S ribosomal subunit biogenesis and possibly also in cell cycle regulation and energy metabolism. This is GTPase Era from Shouchella clausii (strain KSM-K16) (Alkalihalobacillus clausii).